Reading from the N-terminus, the 804-residue chain is E3 UFM1-protein ligase 1 homolog (804 aa).

At M1 the chain carries N-acetylmethionine. Positions 397 to 483 (IHPSSKSSES…VKAQESNNII (87 aa)) are disordered. Low complexity predominate over residues 400-409 (SSKSSESTES). Residues 463 to 475 (LDSKAGGKKESVK) show a composition bias toward basic and acidic residues.

Belongs to the UFL1 family.

Its function is as follows. E3 UFM1-protein ligase that mediates ufmylation of target proteins. This Arabidopsis thaliana (Mouse-ear cress) protein is E3 UFM1-protein ligase 1 homolog.